The following is a 407-amino-acid chain: Aurora kinase (407 aa).

Disordered regions lie at residues 1–43 and 66–137; these read MTPT…STSS and ERQG…TQSK. 2 stretches are compositionally biased toward low complexity: residues 31–43 and 126–136; these read SAST…STSS and STTTTMTSTQS. Residues 147 to 399 enclose the Protein kinase domain; the sequence is FDIGRPLGKG…LEGVIAHAWI (253 aa). ATP contacts are provided by residues Lys157, Lys176, and 224-227; that span reads LEYA. Asp272 (proton acceptor) is an active-site residue. Asp290 serves as a coordination point for ATP.

This sequence belongs to the protein kinase superfamily. Ser/Thr protein kinase family.

The protein localises to the cytoplasm. The protein resides in the cytoskeleton. It is found in the spindle. Its subcellular location is the midbody. It localises to the microtubule organizing center. The protein localises to the centrosome. The protein resides in the nucleus. It is found in the chromosome. Its subcellular location is the centromere. It catalyses the reaction L-seryl-[protein] + ATP = O-phospho-L-seryl-[protein] + ADP + H(+). It carries out the reaction L-threonyl-[protein] + ATP = O-phospho-L-threonyl-[protein] + ADP + H(+). With respect to regulation, cdc2 activity is required for activation. Its function is as follows. Serine/threonine protein kinase that contributes to the regulation of cell cycle progression. Involved in meiotic apparatus formation and polar body extrusion. Contributes to Plk1 activation and phosphorylation of histone H3 at 'Ser-10' during meiosis I. Required for accurate progression of early embryonic M phase. Involved in chromosome alignment and cleavage furrow formation during early embryonic cycles. May be involved in mitotic spindle formation and cytokinesis. This is Aurora kinase from Patiria pectinifera (Starfish).